A 152-amino-acid chain; its full sequence is Urease accessory protein UreE (152 aa).

Belongs to the UreE family.

It is found in the cytoplasm. In terms of biological role, involved in urease metallocenter assembly. Binds nickel. Probably functions as a nickel donor during metallocenter assembly. The chain is Urease accessory protein UreE from Psychromonas ingrahamii (strain DSM 17664 / CCUG 51855 / 37).